The primary structure comprises 430 residues: Adenylosuccinate synthetase (430 aa).

Residues 12-18 (GDEGKGK) and 40-42 (GHT) contribute to the GTP site. D13 (proton acceptor) is an active-site residue. Positions 13 and 40 each coordinate Mg(2+). Residues 13–16 (DEGK), 38–41 (NAGH), T130, R144, Q224, T239, and R303 contribute to the IMP site. Catalysis depends on H41, which acts as the Proton donor. Residue 299 to 305 (VNTGRKR) coordinates substrate. GTP-binding positions include R305, 331-333 (KLD), and 413-415 (STS).

Belongs to the adenylosuccinate synthetase family. Homodimer. Mg(2+) is required as a cofactor.

It localises to the cytoplasm. The enzyme catalyses IMP + L-aspartate + GTP = N(6)-(1,2-dicarboxyethyl)-AMP + GDP + phosphate + 2 H(+). It functions in the pathway purine metabolism; AMP biosynthesis via de novo pathway; AMP from IMP: step 1/2. Its function is as follows. Plays an important role in the de novo pathway of purine nucleotide biosynthesis. Catalyzes the first committed step in the biosynthesis of AMP from IMP. This Nitrobacter hamburgensis (strain DSM 10229 / NCIMB 13809 / X14) protein is Adenylosuccinate synthetase.